The primary structure comprises 2464 residues: Nonribosomal peptide synthetase NPS2 (2464 aa).

The segment at D275–R670 is adenylation 1. The 75-residue stretch at T814–S888 folds into the Carrier 1 domain. An O-(pantetheine 4'-phosphoryl)serine modification is found at S848. Residues I924–G1325 are condensation 1. The 74-residue stretch at E1364 to I1437 folds into the Carrier 2 domain. At S1398 the chain carries O-(pantetheine 4'-phosphoryl)serine. The condensation 2 stretch occupies residues D1479–A1887. Positions S1917–D1993 constitute a Carrier 3 domain. Residue S1954 is modified to O-(pantetheine 4'-phosphoryl)serine. The interval G2047–E2340 is condensation 3.

The protein belongs to the NRP synthetase family.

It participates in siderophore biosynthesis. In terms of biological role, nonribosomal peptide synthetase; part of the siderophore basidioferrin biosynthetic pathway. The biosynthesis of basidioferrin depends on the hydroxylation of ornithine to N(5)-hydroxyornithine, catalyzed by the monooxygenase SMO1. The second step, the acylation of N(5)-hydroxy-L-ornithine is catalyzed by a not yet identified N-acyltransferase. Finally, assembly of basidioferrin is catalyzed by the nonribosomal peptide synthase (NRPS) NPS2 via amide bond formation between three L-AHO molecules to release the linear L-AHO trimer. N-5-acetyl-N-5-hydroxy-L-ornithine (L-AHO) and N-5-cis-anhydromevalonyl-N-5-hydroxy-L-ornithine (L-AMHO) are accepted as the substrates by the NPS2 adenylation (A) domain, but only L-AHO is trimerized. The chain is Nonribosomal peptide synthetase NPS2 from Ceriporiopsis subvermispora (strain B) (White-rot fungus).